The primary structure comprises 146 residues: Large ribosomal subunit protein uL22 (146 aa).

The tract at residues M1–L39 is disordered.

It belongs to the universal ribosomal protein uL22 family. In terms of assembly, part of the 50S ribosomal subunit.

Its function is as follows. This protein binds specifically to 23S rRNA; its binding is stimulated by other ribosomal proteins, e.g. L4, L17, and L20. It is important during the early stages of 50S assembly. It makes multiple contacts with different domains of the 23S rRNA in the assembled 50S subunit and ribosome. Functionally, the globular domain of the protein is located near the polypeptide exit tunnel on the outside of the subunit, while an extended beta-hairpin is found that lines the wall of the exit tunnel in the center of the 70S ribosome. This is Large ribosomal subunit protein uL22 from Anaeromyxobacter dehalogenans (strain 2CP-1 / ATCC BAA-258).